The chain runs to 618 residues: UvrABC system protein C (618 aa).

The 79-residue stretch at S19–V97 folds into the GIY-YIG domain. The 36-residue stretch at Q208–I243 folds into the UVR domain.

This sequence belongs to the UvrC family. Interacts with UvrB in an incision complex.

The protein resides in the cytoplasm. The UvrABC repair system catalyzes the recognition and processing of DNA lesions. UvrC both incises the 5' and 3' sides of the lesion. The N-terminal half is responsible for the 3' incision and the C-terminal half is responsible for the 5' incision. In Legionella pneumophila (strain Lens), this protein is UvrABC system protein C.